Reading from the N-terminus, the 316-residue chain is MTVIGNHEVVGMEGAPRLSEASARDYFELLKPRVMSLVVFTAFAGLVLAPGHINPFIGFTAILCIAIGAGASGALNMWYDADIDAVMSRTAKRPIPAGKILPQEALAFGLTLSAFSVIILGLAVHWLAAGLLAFTIFFYVAIYTMWLKRSTPQNIVIGGAAGAFPPMIGWACVTGGVSVESIVLFLIIFLWTPAHFWALALFKMGDYGAVGVPMMPNVCGEATTKRQIVIYAVLTAVSGVCPTLLGFASLGYGAFATVMGLGFVWYSLGVLRMPEGDKRMVPAKKLFAFSIAYLFAIFSALLVDYAIARIWLGGIV.

9 helical membrane-spanning segments follow: residues 34–54 (VMSL…GHIN), 55–75 (PFIG…SGAL), 95–115 (IPAG…LSAF), 118–138 (IILG…TIFF), 155–175 (IVIG…CVTG), 182–202 (IVLF…LALF), 228–250 (IVIY…FASL), 254–273 (AFAT…VLRM), and 287–307 (FAFS…DYAI).

Belongs to the UbiA prenyltransferase family. Protoheme IX farnesyltransferase subfamily.

The protein localises to the cell inner membrane. It carries out the reaction heme b + (2E,6E)-farnesyl diphosphate + H2O = Fe(II)-heme o + diphosphate. It functions in the pathway porphyrin-containing compound metabolism; heme O biosynthesis; heme O from protoheme: step 1/1. Its function is as follows. Converts heme B (protoheme IX) to heme O by substitution of the vinyl group on carbon 2 of heme B porphyrin ring with a hydroxyethyl farnesyl side group. The polypeptide is Protoheme IX farnesyltransferase (Rhizobium meliloti (strain 1021) (Ensifer meliloti)).